The following is a 360-amino-acid chain: Peptide chain release factor 1 (360 aa).

At Q237 the chain carries N5-methylglutamine.

The protein belongs to the prokaryotic/mitochondrial release factor family. In terms of processing, methylated by PrmC. Methylation increases the termination efficiency of RF1.

It localises to the cytoplasm. Functionally, peptide chain release factor 1 directs the termination of translation in response to the peptide chain termination codons UAG and UAA. In Pseudomonas putida (strain W619), this protein is Peptide chain release factor 1.